The sequence spans 1410 residues: Slit homolog 1 protein (1410 aa).

The first 16 residues, 1 to 16 (MLICFIFILLIPESAT), serve as a signal peptide directing secretion. An LRRNT 1 domain is found at 17–43 (CPAECVCVDRTVSCVGQQLTEVPQNIP). LRR repeat units lie at residues 22–42 (VCVDRTVSCVGQQLTEVPQNI), 43–66 (PNDTIRLDLQDNEITKIGPNDFSS), 67–90 (LMNLKALQLMDNQIVTIHNQSFSS), 91–114 (LVFLQKLRLSRNRIRHLPDNVFQN), 116–138 (LKLTHLDLSENDITVVSDAQLQG), 140–162 (EFLEVLNLDKNHIFCLENNVISS), 163–186 (WVSLEVLTLNGNRLTTFEEPSNAR), 219–242 (TVCATPLNLQGSSIEILQDKFMTC), 286–309 (PPSTTEIRLEQNQISSIPSHSFKN), 310–333 (LKNLTRLDLSKNIITEIQPKAFLG), 335–357 (HNLHTLVLYGNNITDLKSDTFEG), 358–381 (LGSLQLLLLNANQLTCIRRGTFDH), 383–405 (PKLSMLSLYDNDIKSISEVTFQN), 407–430 (TSLSTLHLAKNPLICDCNLQWLAQ), 442–465 (ARCEQPKRLRKKKFATLPPNKFKC), 489–510 (CDCYGTTVDCNKRGLNTIPTSI), 511–535 (PRFATQLLLSGNNISTVDLNSNIHV), 536–559 (LENLEVLDLSNNHITFINDKSFEK), 561–583 (SKLRELRLNDNKLHHFSSMVLDE), and 585–607 (SNLEILDLSGNNIQCFSSIFFNK). The region spanning 195 to 243 (NPWNCDCRLRWMRKWLEKAEGQNKTVCATPLNLQGSSIEILQDKFMTCS) is the LRRCT 1 domain. In terms of domain architecture, LRRNT 2 spans 259 to 286 (ICPLPCTCTGTTVDCRDSGLTYVPTNLP). One can recognise an LRRCT 2 domain in the interval 417–466 (NPLICDCNLQWLAQINLQKNIETSGARCEQPKRLRKKKFATLPPNKFKCK). The LRRNT 3 domain occupies 484–511 (ICPTQCDCYGTTVDCNKRGLNTIPTSIP). One can recognise an LRRCT 3 domain in the interval 619–671 (NDLLCDCRILPLMSWLRSNSSHSIDIPPCQQFQYSDNESDKQRCAAFPEETCS). One can recognise an LRRNT 4 domain in the interval 677-703 (CPPKCSCLDRVVRCSNKNLTSFPSRIP). 6 LRR repeats span residues 681–703 (CSCLDRVVRCSNKNLTSFPSRIP), 704–726 (FDTTELYLDANYINEIPAHDLNR), 727–750 (LYSLTKLDLSHNRLISLENNTFSN), 752–774 (TRLSTLIISYNKLRCLQPLAFNG), 775–798 (LNALRILSLHGNDISFLPQSAFSN), and 800–823 (TSITHIAVGSNSLYCDCNMAWFSK). Residues 810-859 (NSLYCDCNMAWFSKWIKSKFIEAGIARCEYPNTVSNQLLLTAQPYQFTCD) enclose the LRRCT 4 domain. EGF-like domains follow at residues 871 to 906 (DLCLNSPCKNNAICETTSSRKYTCNCTPGFYGVHCE) and 908 to 945 (QIDACYGSPCLNNATCKVAQAGRFNCYCNKGFEGDYCE). 18 disulfides stabilise this stretch: C873-C884, C878-C894, C896-C905, C912-C923, C917-C933, C935-C944, C951-C962, C956-C971, C973-C982, C989-C1002, C996-C1011, C1013-C1022, C1029-C1040, C1034-C1049, C1051-C1060, C1076-C1086, C1081-C1097, and C1099-C1108. Positions 947–983 (NIDDCVNSKCENGGKCVDLINSYRCDCPMEYEGKHCE) constitute an EGF-like 1; calcium-binding domain. The 39-residue stretch at 985-1023 (KLEYCTKKLNPCENNGKCIPINGSYSCMCSPGFTGNNCE) folds into the EGF-like 3 domain. An EGF-like 2; calcium-binding domain is found at 1025–1061 (NIDDCKNVECQNGGSCVDGILSYDCLCRPGYAGQYCE). The region spanning 1072-1109 (KTDACQQSACGQGECVASQNSSDFTCKCHEGFSGPSCD) is the EGF-like 4 domain. The region spanning 1112 to 1285 (MSVGFKNPGA…LENVNTEQSC (174 aa)) is the Laminin G-like domain. One copy of the LRR 27 repeat lies at 1197–1221 (TSERKCFLQIDKNPVQIVENSGKSD). Disulfide bonds link C1259/C1285, C1292/C1302, C1297/C1314, C1316/C1325, C1332/C1368, C1346/C1382, C1357/C1398, and C1361/C1400. One can recognise an EGF-like 5 domain in the interval 1288–1326 (TVNFCAGIDCGNGKCTNNALSPKGYMCQCDSHFSGEHCD). The CTCK domain occupies 1332–1406 (CDKQKFRRHH…QCQCEPTKSV (75 aa)).

Interacts with eva-1.

The protein localises to the secreted. Functionally, functions as a ligand for sax-3 receptor during larval development. Acts via the sax-3/Robo receptor to direct ventral axon guidance and guidance at the midline during embryonic development. In Caenorhabditis elegans, this protein is Slit homolog 1 protein (slt-1).